We begin with the raw amino-acid sequence, 789 residues long: Probable Xaa-Pro aminopeptidase SNOG_02267 (789 aa).

Mn(2+)-binding residues include aspartate 240, aspartate 251, glutamate 375, and glutamate 416. Disordered regions lie at residues 607-658 (SMSK…TGLA) and 670-704 (NHVS…DDAL). Over residues 622–637 (VISQKQIRNRRSVSST) the composition is skewed to polar residues. Over residues 638–650 (ARHDLRGDRERPQ) the composition is skewed to basic and acidic residues.

Belongs to the peptidase M24B family. It depends on Mn(2+) as a cofactor.

The catalysed reaction is Release of any N-terminal amino acid, including proline, that is linked to proline, even from a dipeptide or tripeptide.. In terms of biological role, catalyzes the removal of a penultimate prolyl residue from the N-termini of peptides. This is Probable Xaa-Pro aminopeptidase SNOG_02267 from Phaeosphaeria nodorum (strain SN15 / ATCC MYA-4574 / FGSC 10173) (Glume blotch fungus).